A 320-amino-acid polypeptide reads, in one-letter code: Agamous-like MADS-box protein AGL90 (320 aa).

The MADS-box domain maps to 1 to 59 (MKKVKLSLIANERSRKTSFMKRKNGIFKKLHELSTLCGVQACALIYSPFIPVPESWPSR). The stretch at 80–115 (KMMDQETHLMERITKAKEQLKNLAAENRELQVRRFM) forms a coiled coil.

In terms of assembly, interacts with AGL62.

The protein resides in the nucleus. Probable transcription factor. In Arabidopsis thaliana (Mouse-ear cress), this protein is Agamous-like MADS-box protein AGL90 (AGL90).